A 61-amino-acid polypeptide reads, in one-letter code: Large ribosomal subunit protein uL30 (61 aa).

Belongs to the universal ribosomal protein uL30 family. As to quaternary structure, part of the 50S ribosomal subunit.

The sequence is that of Large ribosomal subunit protein uL30 from Chlorobium phaeobacteroides (strain DSM 266 / SMG 266 / 2430).